Reading from the N-terminus, the 171-residue chain is MAEKRNIFLVGPMGAGKSTIGRHLAQLLHLEFHDSDHEIEQRTGADIAWVFDVEGEEGFRRREAQVIADLSEKQGIVLATGGGSVQSKDIRNHLSARGIVVYLETTIDKQVARTQRDKRRPLLQVDDPREVLENLAETRNPLYEEIADVIVKTDEQSAKIVANQIIEQLGF.

14–19 (GAGKST) is a binding site for ATP. Residue Ser-18 coordinates Mg(2+). Residues Asp-36, Arg-60, and Gly-82 each coordinate substrate. Position 120 (Arg-120) interacts with ATP. Arg-139 serves as a coordination point for substrate. An ATP-binding site is contributed by Gln-156.

It belongs to the shikimate kinase family. In terms of assembly, monomer. The cofactor is Mg(2+).

It localises to the cytoplasm. It carries out the reaction shikimate + ATP = 3-phosphoshikimate + ADP + H(+). Its pathway is metabolic intermediate biosynthesis; chorismate biosynthesis; chorismate from D-erythrose 4-phosphate and phosphoenolpyruvate: step 5/7. Its function is as follows. Catalyzes the specific phosphorylation of the 3-hydroxyl group of shikimic acid using ATP as a cosubstrate. This Shewanella denitrificans (strain OS217 / ATCC BAA-1090 / DSM 15013) protein is Shikimate kinase.